Reading from the N-terminus, the 247-residue chain is tRNA pseudouridine synthase A (247 aa).

The active-site Nucleophile is Asp-53. Tyr-111 is a binding site for substrate.

This sequence belongs to the tRNA pseudouridine synthase TruA family. Homodimer.

The enzyme catalyses uridine(38/39/40) in tRNA = pseudouridine(38/39/40) in tRNA. Its function is as follows. Formation of pseudouridine at positions 38, 39 and 40 in the anticodon stem and loop of transfer RNAs. This Bacillus velezensis (strain DSM 23117 / BGSC 10A6 / LMG 26770 / FZB42) (Bacillus amyloliquefaciens subsp. plantarum) protein is tRNA pseudouridine synthase A.